Reading from the N-terminus, the 126-residue chain is Holo-[acyl-carrier-protein] synthase (126 aa).

Mg(2+) contacts are provided by D9 and E58.

Belongs to the P-Pant transferase superfamily. AcpS family. The cofactor is Mg(2+).

Its subcellular location is the cytoplasm. The enzyme catalyses apo-[ACP] + CoA = holo-[ACP] + adenosine 3',5'-bisphosphate + H(+). Functionally, transfers the 4'-phosphopantetheine moiety from coenzyme A to a Ser of acyl-carrier-protein. The sequence is that of Holo-[acyl-carrier-protein] synthase from Vibrio parahaemolyticus serotype O3:K6 (strain RIMD 2210633).